The following is a 237-amino-acid chain: Ribosomal RNA small subunit methyltransferase G (237 aa).

S-adenosyl-L-methionine contacts are provided by residues Gly78, Phe83, 129–130 (AE), and Arg148. Positions 218–237 (KKETPRKYPRKAGTPNKKPL) are disordered.

It belongs to the methyltransferase superfamily. RNA methyltransferase RsmG family.

The protein resides in the cytoplasm. In terms of biological role, specifically methylates the N7 position of a guanine in 16S rRNA. In Streptococcus uberis (strain ATCC BAA-854 / 0140J), this protein is Ribosomal RNA small subunit methyltransferase G.